Here is a 277-residue protein sequence, read N- to C-terminus: Bis(5'-nucleosyl)-tetraphosphatase, symmetrical (277 aa).

This sequence belongs to the Ap4A hydrolase family.

The catalysed reaction is P(1),P(4)-bis(5'-adenosyl) tetraphosphate + H2O = 2 ADP + 2 H(+). Its function is as follows. Hydrolyzes diadenosine 5',5'''-P1,P4-tetraphosphate to yield ADP. This Chromobacterium violaceum (strain ATCC 12472 / DSM 30191 / JCM 1249 / CCUG 213 / NBRC 12614 / NCIMB 9131 / NCTC 9757 / MK) protein is Bis(5'-nucleosyl)-tetraphosphatase, symmetrical.